The primary structure comprises 371 residues: Ferrochelatase (371 aa).

Fe cation-binding residues include His218 and Glu299.

It belongs to the ferrochelatase family.

The protein resides in the cytoplasm. The enzyme catalyses heme b + 2 H(+) = protoporphyrin IX + Fe(2+). It participates in porphyrin-containing compound metabolism; protoheme biosynthesis; protoheme from protoporphyrin-IX: step 1/1. In terms of biological role, catalyzes the ferrous insertion into protoporphyrin IX. The polypeptide is Ferrochelatase (Ralstonia pickettii (strain 12J)).